An 830-amino-acid chain; its full sequence is Adhesion G protein-coupled receptor E2 (830 aa).

The signal sequence occupies residues 1 to 22; sequence MRHGHPRLLPGLLMLLLLPLGA. The Extracellular portion of the chain corresponds to 23–540; sequence AAQKTSGCAR…MAHYDVQEED (518 aa). Positions 26 to 68 constitute an EGF-like 1 domain; the sequence is KTSGCARWCPPKSTCVNATTCRCSPGFSSLSGEIFSSPLESCD. 5 disulfides stabilise this stretch: Cys30–Cys40, Cys34–Cys46, Cys48–Cys67, Cys73–Cys87, and Cys81–Cys96. Residue Asn42 is glycosylated (N-linked (GlcNAc...) asparagine). The 40-residue stretch at 69–108 folds into the EGF-like 1; calcium-binding domain; that stretch reads DIDECGPPPLVSCGRLADCQNTEGSYHCMCSPGYALASGA. N-linked (GlcNAc...) asparagine glycosylation is present at Asn113. The region spanning 121-159 is the EGF-like 2; calcium-binding domain; that stretch reads DVDECQLKPRVCKSRGICTNTKGSYTCKCPPGFELNLGD. Intrachain disulfides connect Cys125-Cys138, Cys132-Cys147, Cys169-Cys182, Cys176-Cys191, Cys218-Cys231, and Cys225-Cys240. The region spanning 165 to 203 is the EGF-like 3; calcium-binding domain; the sequence is DVNECTSGQNPCHNSTHCLNNIGGYECRCRPGWKPVPGS. An N-linked (GlcNAc...) asparagine glycan is attached at Asn178. The region spanning 214 to 253 is the EGF-like 4; calcium-binding domain; that stretch reads DVDECSSGKHTCHYSTVCINTVGSYKCRCRRGWKPKPRFQ. N-linked (GlcNAc...) asparagine glycans are attached at residues Asn258, Asn348, Asn361, and Asn379. A GAIN-B domain is found at 358 to 537; sequence WTFNASAGTD…AVLMAHYDVQ (180 aa). 2 cysteine pairs are disulfide-bonded: Cys489/Cys519 and Cys507/Cys521. A GPS region spans residues 489 to 537; the sequence is CVFWEHSQDECGHWSTRGCTVVDSGDTSTTCQCTHLSSFAVLMAHYDVQ. Residues 541–561 traverse the membrane as a helical segment; that stretch reads LVLPVITYVGLGLSLLCLLLA. Residues 562–576 lie on the Cytoplasmic side of the membrane; it reads ALTFLLCKAIQNTST. A helical membrane pass occupies residues 577–597; sequence SLHLQLLICLFLAHLLFLMAI. The Extracellular segment spans residues 598–603; it reads DRTEIK. A helical membrane pass occupies residues 604–624; that stretch reads VLCSIIAGALHYLYLASFTWM. The Cytoplasmic portion of the chain corresponds to 625–651; the sequence is LLEGLHLFLTARNLMVVNYSSVSMLMK. Residues 652 to 672 traverse the membrane as a helical segment; the sequence is KLMYPVGYGVPTLIVAISAAS. Topologically, residues 673 to 690 are extracellular; sequence RSHLYGTRTRCWLNPEER. The helical transmembrane segment at 691–711 threads the bilayer; the sequence is FIWSFLGPVCTIFSVNLGFFL. The Cytoplasmic segment spans residues 712–744; sequence MTLWILKSKLSSLNSDVSTLQNTRMLTFKAIAQ. Residues 745-765 form a helical membrane-spanning segment; that stretch reads LFILGCTWCLGILQVGPAAHV. The Extracellular segment spans residues 766-767; the sequence is MA. Residues 768 to 788 form a helical membrane-spanning segment; sequence YLFTIINSLQGVFIFLVYCLL. Residues 789-830 are Cytoplasmic-facing; sequence SQQVREEYGKWFKGIRKTRAESEKYTLSSRAMSDVNKPMMVN.

The protein belongs to the G-protein coupled receptor 2 family. Adhesion G-protein coupled receptor (ADGR) subfamily. As to quaternary structure, forms a heterodimer, consisting of a large extracellular region non-covalently linked to a seven-transmembrane moiety. Interacts with chondroitin sulfate; the interaction with chondroitin sulfate is calcium-dependent. Interacts with CD55. Autoproteolytically cleaved into 2 subunits, an extracellular alpha subunit and a seven-transmembrane beta subunit.

The protein localises to the cell membrane. The protein resides in the cell projection. Its subcellular location is the ruffle membrane. In terms of biological role, cell surface receptor that binds to the chondroitin sulfate moiety of glycosaminoglycan chains and promotes cell attachment. Promotes granulocyte chemotaxis, degranulation and adhesion. In macrophages, promotes the release of inflammatory cytokines, including IL8 and TNF. Signals probably through G-proteins. This Canis lupus familiaris (Dog) protein is Adhesion G protein-coupled receptor E2 (ADGRE2).